The following is a 116-amino-acid chain: Putative iron-sulfur cluster insertion protein ErpA (116 aa).

Cys-44, Cys-108, and Cys-110 together coordinate iron-sulfur cluster.

It belongs to the HesB/IscA family. As to quaternary structure, homodimer. The cofactor is iron-sulfur cluster.

Its function is as follows. Required for insertion of 4Fe-4S clusters. In Aromatoleum aromaticum (strain DSM 19018 / LMG 30748 / EbN1) (Azoarcus sp. (strain EbN1)), this protein is Putative iron-sulfur cluster insertion protein ErpA.